The chain runs to 124 residues: Fluoride-specific ion channel FluC (124 aa).

A run of 4 helical transmembrane segments spans residues 1 to 21 (MAYLLVFVGGGLGAMFRHFIN), 36 to 56 (TFFINVTGSIVMGLIAGYLAF), 66 to 86 (LFLMTGILGGYTTFSAFSLDA), and 94 to 114 (AVGLAVVYVLGSVVLAIAGLF). The Na(+) site is built by glycine 74 and threonine 77.

The protein belongs to the fluoride channel Fluc/FEX (TC 1.A.43) family.

It is found in the cell inner membrane. It carries out the reaction fluoride(in) = fluoride(out). Na(+) is not transported, but it plays an essential structural role and its presence is essential for fluoride channel function. Fluoride-specific ion channel. Important for reducing fluoride concentration in the cell, thus reducing its toxicity. In Rhodopseudomonas palustris (strain ATCC BAA-98 / CGA009), this protein is Fluoride-specific ion channel FluC.